Reading from the N-terminus, the 138-residue chain is Cellular retinoic acid-binding protein 2 (138 aa).

The short motif at 21 to 31 is the Nuclear localization signal element; sequence KVLGVNVMLRK. Lys-102 participates in a covalent cross-link: Glycyl lysine isopeptide (Lys-Gly) (interchain with G-Cter in SUMO). 133-135 contributes to the all-trans-retinoate binding site; that stretch reads RVY.

This sequence belongs to the calycin superfamily. Fatty-acid binding protein (FABP) family. In terms of assembly, interacts with importin alpha, RXR and RARA. In terms of processing, sumoylated in response to retinoic acid binding, sumoylation is critical for dissociation from ER and subsequent nuclear translocation.

The protein resides in the cytoplasm. It localises to the endoplasmic reticulum. The protein localises to the nucleus. Its function is as follows. Transports retinoic acid to the nucleus. Regulates the access of retinoic acid to the nuclear retinoic acid receptors. This Bos taurus (Bovine) protein is Cellular retinoic acid-binding protein 2 (CRABP2).